We begin with the raw amino-acid sequence, 149 residues long: 3-dehydroquinate dehydratase (149 aa).

The active-site Proton acceptor is the Tyr-22. Substrate contacts are provided by Asn-74, His-80, and Asp-87. His-100 (proton donor) is an active-site residue. Substrate is bound by residues 101–102 and Arg-111; that span reads LS.

The protein belongs to the type-II 3-dehydroquinase family. As to quaternary structure, homododecamer.

It carries out the reaction 3-dehydroquinate = 3-dehydroshikimate + H2O. The protein operates within metabolic intermediate biosynthesis; chorismate biosynthesis; chorismate from D-erythrose 4-phosphate and phosphoenolpyruvate: step 3/7. Catalyzes a trans-dehydration via an enolate intermediate. The sequence is that of 3-dehydroquinate dehydratase from Vesicomyosocius okutanii subsp. Calyptogena okutanii (strain HA).